The primary structure comprises 63 residues: 2-hydroxymuconate tautomerase (63 aa).

Proline 2 functions as the Proton acceptor; via imino nitrogen in the catalytic mechanism.

Belongs to the 4-oxalocrotonate tautomerase family. As to quaternary structure, homohexamer.

It catalyses the reaction (2Z,4E)-2-hydroxyhexa-2,4-dienedioate = (3E)-2-oxohex-3-enedioate. Its pathway is aromatic compound metabolism; salicylate degradation. Catalyzes the ketonization of 2-hydroxymuconate stereoselectively to yield 2-oxo-3-hexenedioate. This is 2-hydroxymuconate tautomerase (tdnL) from Pseudomonas putida (Arthrobacter siderocapsulatus).